Consider the following 853-residue polypeptide: DNA mismatch repair protein MutS (853 aa).

614 to 621 contributes to the ATP binding site; sequence GPNMGGKS.

The protein belongs to the DNA mismatch repair MutS family.

Functionally, this protein is involved in the repair of mismatches in DNA. It is possible that it carries out the mismatch recognition step. This protein has a weak ATPase activity. This chain is DNA mismatch repair protein MutS, found in Escherichia coli (strain SE11).